Here is a 186-residue protein sequence, read N- to C-terminus: Elongation factor P (186 aa).

Belongs to the elongation factor P family.

The protein resides in the cytoplasm. It functions in the pathway protein biosynthesis; polypeptide chain elongation. Involved in peptide bond synthesis. Stimulates efficient translation and peptide-bond synthesis on native or reconstituted 70S ribosomes in vitro. Probably functions indirectly by altering the affinity of the ribosome for aminoacyl-tRNA, thus increasing their reactivity as acceptors for peptidyl transferase. This is Elongation factor P from Prochlorococcus marinus (strain MIT 9312).